The primary structure comprises 484 residues: Fumigaclavine B O-acetyltransferase ifgI (484 aa).

The protein belongs to the fumigaclavine B O-acetyltransferase family. As to quaternary structure, monomer.

It catalyses the reaction fumigaclavine B + acetyl-CoA = fumigaclavine A + CoA. It participates in alkaloid biosynthesis; ergot alkaloid biosynthesis. Fumigaclavine B O-acetyltransferase; part of the gene cluster that mediates the biosynthesis of isofumigaclavines, fungal ergot alkaloids. The tryptophan dimethylallyltransferase ifgA catalyzes the first step of ergot alkaloid biosynthesis by condensing dimethylallyl diphosphate (DMAP) and tryptophan to form 4-dimethylallyl-L-tryptophan. The second step is catalyzed by the methyltransferase ifgB that methylates 4-dimethylallyl-L-tryptophan in the presence of S-adenosyl-L-methionine, resulting in the formation of N-methyl-dimethylallyl-L-tryptophan. The catalase ifgD and the FAD-dependent oxidoreductase ifgC then transform N-methyl-dimethylallyl-L-tryptophan to chanoclavine-I which is further oxidized by ifgE in the presence of NAD(+), resulting in the formation of chanoclavine-I aldehyde. The chanoclavine-I aldehyde reductases ifgG and/or fgaOx3 reduce chanoclavine-I aldehyde to dihydrochanoclavine-I aldehyde that spontaneously dehydrates to form 6,8-dimethyl-6,7-didehydroergoline. The festuclavine dehydrogenases ifgF1 and/or ifgF2 then catalyze the reduction of 6,8-dimethyl-6,7-didehydroergoline to form festuclavine. Hydrolysis of festuclavine by a yet undetermined cytochrome P450 monooxygenase (called ifgH) then leads to the formation of isofumigaclavine B which is in turn acetylated by ifgI to isofumigaclavine A. Penicillium roqueforti has interestingly at least two sets of genes for the consumption of chanoclavine-I aldehyde on three different loci, the OYEs ifgG/fgaOx3 and the festuclavine synthase homologs ifgF1/ifgF2. The reason for the duplication of these genes is unclear, probably to ensure the conversion of chanoclavine-I aldehyde by differential gene expression under various environmental conditions. The chain is Fumigaclavine B O-acetyltransferase ifgI from Penicillium roqueforti (strain FM164).